The following is a 628-amino-acid chain: Isoleucine--tRNA ligase (628 aa).

The 'KMSKS' region motif lies at 505 to 509; sequence KMSKR. Lys508 provides a ligand contact to ATP.

The protein belongs to the class-I aminoacyl-tRNA synthetase family.

The enzyme catalyses tRNA(Ile) + L-isoleucine + ATP = L-isoleucyl-tRNA(Ile) + AMP + diphosphate. This Antonospora locustae (Microsporidian parasite) protein is Isoleucine--tRNA ligase.